The primary structure comprises 199 residues: MCSNEYPWVCGVDEAGRGPLAGPVFAACVILDPASPIDGLADSKTLTEGKRNSLTLAIKAYSIAWAIGFASVREIDRLNILQASLLAMKRAIGKLPVTPARVLVDGNHSPRLKFPVTTIVRGDSLVPEISAASILAKTARDAEMMALHRRFPRYGFDQHKGYSTEQHLAALKIHGVSIVHRRSFAPVRELMANEKDAES.

The RNase H type-2 domain occupies 7-196 (PWVCGVDEAG…VRELMANEKD (190 aa)). Asp13, Glu14, and Asp105 together coordinate a divalent metal cation.

The protein belongs to the RNase HII family. Mn(2+) serves as cofactor. It depends on Mg(2+) as a cofactor.

The protein resides in the cytoplasm. It catalyses the reaction Endonucleolytic cleavage to 5'-phosphomonoester.. Its function is as follows. Endonuclease that specifically degrades the RNA of RNA-DNA hybrids. This chain is Ribonuclease HII, found in Nitrosospira multiformis (strain ATCC 25196 / NCIMB 11849 / C 71).